The primary structure comprises 234 residues: MAESTTAVGHDELAALKFVALEGAHSEPIKISCSELSDRLDASSQTASRRLQRLEAAGYLDRDVVTDGQWVSLTKAGETALHKEYTQYQEIFGDNSSVVELTGTVTSGMGEGRHYISLSGYMKQFRERLGYEPFPGTLNIDLDDDSTRTRVAVSSLTGIQIDGWEDDERTFGPATCYPAEIILAEQTAEAAHIIVPERTHHDETQLEVIAPERLRDSLELTDGQRITVQLKPKE.

Residues 1–98 (MAESTTAVGH…QEIFGDNSSV (98 aa)) are H-T-H motif-like. The tract at residues 99–234 (VELTGTVTSG…RITVQLKPKE (136 aa)) is riboflavin kinase. 108-113 (GMGEGR) provides a ligand contact to CDP. The Mg(2+) site is built by threonine 137 and asparagine 139. Residues threonine 199 and glutamate 207 each contribute to the FMN site. 212–215 (ERLR) is a binding site for CDP.

This sequence belongs to the archaeal riboflavin kinase family. Mg(2+) is required as a cofactor.

It carries out the reaction riboflavin + CTP = CDP + FMN + H(+). Its pathway is cofactor biosynthesis; FMN biosynthesis; FMN from riboflavin (CTP route): step 1/1. Functionally, catalyzes the CTP-dependent phosphorylation of riboflavin (vitamin B2) to form flavin mononucleotide (FMN). This chain is Riboflavin kinase (ribK), found in Haloquadratum walsbyi (strain DSM 16790 / HBSQ001).